The primary structure comprises 364 residues: Chorismate synthase (364 aa).

A disordered region spans residues 41–60; it reads MQHDLDRRRPGTSRYTTARR. Residues Arg48 and Arg54 each coordinate NADP(+). FMN contacts are provided by residues 125–127, 238–239, Gly278, 293–297, and Arg319; these read RSS, NA, and KPTSS.

This sequence belongs to the chorismate synthase family. Homotetramer. FMNH2 is required as a cofactor.

The catalysed reaction is 5-O-(1-carboxyvinyl)-3-phosphoshikimate = chorismate + phosphate. The protein operates within metabolic intermediate biosynthesis; chorismate biosynthesis; chorismate from D-erythrose 4-phosphate and phosphoenolpyruvate: step 7/7. In terms of biological role, catalyzes the anti-1,4-elimination of the C-3 phosphate and the C-6 proR hydrogen from 5-enolpyruvylshikimate-3-phosphate (EPSP) to yield chorismate, which is the branch point compound that serves as the starting substrate for the three terminal pathways of aromatic amino acid biosynthesis. This reaction introduces a second double bond into the aromatic ring system. This chain is Chorismate synthase, found in Shewanella sp. (strain ANA-3).